The following is an 874-amino-acid chain: Alanine--tRNA ligase (874 aa).

His564, His568, Cys665, and His669 together coordinate Zn(2+).

Belongs to the class-II aminoacyl-tRNA synthetase family. The cofactor is Zn(2+).

Its subcellular location is the cytoplasm. The enzyme catalyses tRNA(Ala) + L-alanine + ATP = L-alanyl-tRNA(Ala) + AMP + diphosphate. Its function is as follows. Catalyzes the attachment of alanine to tRNA(Ala) in a two-step reaction: alanine is first activated by ATP to form Ala-AMP and then transferred to the acceptor end of tRNA(Ala). Also edits incorrectly charged Ser-tRNA(Ala) and Gly-tRNA(Ala) via its editing domain. This Burkholderia mallei (strain ATCC 23344) protein is Alanine--tRNA ligase.